Here is a 290-residue protein sequence, read N- to C-terminus: Arylamine N-acetyltransferase 2 (290 aa).

The active-site Acyl-thioester intermediate is Cys-68. Positions 103 and 104 each coordinate CoA. Val-106–His-107 is a binding site for substrate. Residues His-107 and Asp-122 contribute to the active site. 3 residues coordinate CoA: Tyr-208, Thr-214, and Ser-287.

The protein belongs to the arylamine N-acetyltransferase family.

It localises to the cytoplasm. It catalyses the reaction an arylamine + acetyl-CoA = an N-acetylarylamine + CoA. The enzyme catalyses an N-hydroxyarylamine + acetyl-CoA = an N-acetoxyarylamine + CoA. Its function is as follows. Catalyzes the N- or O-acetylation of various arylamine and heterocyclic amine substrates. Participates in the detoxification of a plethora of hydrazine and arylamine drugs, and is able to bioactivate several known carcinogens. The sequence is that of Arylamine N-acetyltransferase 2 (NAT2) from Homo sapiens (Human).